The following is a 374-amino-acid chain: Aminomethyltransferase (374 aa).

This sequence belongs to the GcvT family. The glycine cleavage system is composed of four proteins: P, T, L and H.

It carries out the reaction N(6)-[(R)-S(8)-aminomethyldihydrolipoyl]-L-lysyl-[protein] + (6S)-5,6,7,8-tetrahydrofolate = N(6)-[(R)-dihydrolipoyl]-L-lysyl-[protein] + (6R)-5,10-methylene-5,6,7,8-tetrahydrofolate + NH4(+). The glycine cleavage system catalyzes the degradation of glycine. In Prochlorococcus marinus (strain MIT 9313), this protein is Aminomethyltransferase.